A 98-amino-acid chain; its full sequence is Small ribosomal subunit protein uS19 (98 aa).

The interval 77 to 98 is disordered; sequence TRTYRGHAGGKAEKGGAAPKRK.

Belongs to the universal ribosomal protein uS19 family.

Functionally, protein S19 forms a complex with S13 that binds strongly to the 16S ribosomal RNA. The polypeptide is Small ribosomal subunit protein uS19 (Chlorobium phaeovibrioides (strain DSM 265 / 1930) (Prosthecochloris vibrioformis (strain DSM 265))).